A 294-amino-acid chain; its full sequence is N-acetylmuramic acid 6-phosphate etherase (294 aa).

Positions 54 to 217 (VIQSFEEEGR…STASMIGVGK (164 aa)) constitute an SIS domain. The active-site Proton donor is Glu82. Glu113 is a catalytic residue.

It belongs to the GCKR-like family. MurNAc-6-P etherase subfamily. In terms of assembly, homodimer.

The catalysed reaction is N-acetyl-D-muramate 6-phosphate + H2O = N-acetyl-D-glucosamine 6-phosphate + (R)-lactate. The protein operates within amino-sugar metabolism; N-acetylmuramate degradation. Specifically catalyzes the cleavage of the D-lactyl ether substituent of MurNAc 6-phosphate, producing GlcNAc 6-phosphate and D-lactate. This chain is N-acetylmuramic acid 6-phosphate etherase, found in Bacillus anthracis (strain A0248).